Consider the following 771-residue polypeptide: Ribonucleoside-diphosphate reductase large subunit (771 aa).

Positions 1–92 (MFVIKRNGYK…ISNLHKETKK (92 aa)) constitute an ATP-cone domain. Residues 5–6 (KR), 11–17 (ENVMFDK), threonine 53, aspartate 57, and lysine 88 contribute to the ATP site. Serine 202 and serine 217 together coordinate GDP. Residues 226–228 (DSI), lysine 243, and arginine 256 each bind dTTP. Asparagine 427 lines the GDP pocket. Asparagine 427 serves as the catalytic Proton acceptor. The active-site Cysteine radical intermediate is the cysteine 429. GDP contacts are provided by residues glutamate 431 and 603–606 (TAST). Catalysis depends on glutamate 431, which acts as the Proton acceptor.

It belongs to the ribonucleoside diphosphate reductase large chain family. In terms of assembly, interacts with RNR2/OPG047 subunit. The cofactor is Mg(2+).

It carries out the reaction a 2'-deoxyribonucleoside 5'-diphosphate + [thioredoxin]-disulfide + H2O = a ribonucleoside 5'-diphosphate + [thioredoxin]-dithiol. In terms of biological role, ribonucleoside-diphosphate reductase holoenzyme provides the precursors necessary for viral DNA synthesis. Allows virus growth in non-dividing cells. Catalyzes the biosynthesis of deoxyribonucleotides from the corresponding ribonucleotides. This is Ribonucleoside-diphosphate reductase large subunit (OPG080) from Monkeypox virus.